A 265-amino-acid chain; its full sequence is Thiazole synthase (265 aa).

K103 serves as the catalytic Schiff-base intermediate with DXP. 1-deoxy-D-xylulose 5-phosphate is bound by residues G164, 190–191 (AG), and 212–213 (NT).

The protein belongs to the ThiG family. In terms of assembly, homotetramer. Forms heterodimers with either ThiH or ThiS.

It localises to the cytoplasm. The catalysed reaction is [ThiS sulfur-carrier protein]-C-terminal-Gly-aminoethanethioate + 2-iminoacetate + 1-deoxy-D-xylulose 5-phosphate = [ThiS sulfur-carrier protein]-C-terminal Gly-Gly + 2-[(2R,5Z)-2-carboxy-4-methylthiazol-5(2H)-ylidene]ethyl phosphate + 2 H2O + H(+). It functions in the pathway cofactor biosynthesis; thiamine diphosphate biosynthesis. Catalyzes the rearrangement of 1-deoxy-D-xylulose 5-phosphate (DXP) to produce the thiazole phosphate moiety of thiamine. Sulfur is provided by the thiocarboxylate moiety of the carrier protein ThiS. In vitro, sulfur can be provided by H(2)S. This is Thiazole synthase from Bordetella pertussis (strain Tohama I / ATCC BAA-589 / NCTC 13251).